A 249-amino-acid chain; its full sequence is Phycobilisome 27.9 kDa linker polypeptide, phycoerythrin-associated, rod (249 aa).

In terms of domain architecture, PBS-linker spans 2-166 (ASQTILELWP…LDRGPAQIDS (165 aa)). The 51-residue stretch at 198 to 248 (EKRFKILVQGSKFDSPRRISTTEYIVPASKMTPQIQRINRTSGKIVSITEI) folds into the CpcD-like domain.

The protein belongs to the phycobilisome linker protein family. As to quaternary structure, the phycobilisome is a hemidiscoidal structure that is composed of two distinct substructures: a core complex and six rods radiating from the core.

It is found in the cellular thylakoid membrane. Functionally, rod linker protein, associated with phycoerythrin. Linker polypeptides determine the state of aggregation and the location of the disk-shaped phycobiliprotein units within the phycobilisome and modulate their spectroscopic properties in order to mediate a directed and optimal energy transfer. This chain is Phycobilisome 27.9 kDa linker polypeptide, phycoerythrin-associated, rod (cpeD), found in Microchaete diplosiphon (Fremyella diplosiphon).